The primary structure comprises 229 residues: GTP cyclohydrolase 1 (229 aa).

The tract at residues Met1–Glu26 is disordered. Positions 118, 121, and 189 each coordinate Zn(2+).

Belongs to the GTP cyclohydrolase I family. In terms of assembly, toroid-shaped homodecamer, composed of two pentamers of five dimers.

The enzyme catalyses GTP + H2O = 7,8-dihydroneopterin 3'-triphosphate + formate + H(+). It functions in the pathway cofactor biosynthesis; 7,8-dihydroneopterin triphosphate biosynthesis; 7,8-dihydroneopterin triphosphate from GTP: step 1/1. The chain is GTP cyclohydrolase 1 from Rhodopseudomonas palustris (strain ATCC BAA-98 / CGA009).